A 278-amino-acid chain; its full sequence is Phosphate import ATP-binding protein PstB (278 aa).

The 242-residue stretch at 32 to 273 (YETRDLNLWY…PSDKRTEDYI (242 aa)) folds into the ABC transporter domain. 64-71 (GPSGCGKS) provides a ligand contact to ATP.

It belongs to the ABC transporter superfamily. Phosphate importer (TC 3.A.1.7) family. In terms of assembly, the complex is composed of two ATP-binding proteins (PstB), two transmembrane proteins (PstC and PstA) and a solute-binding protein (PstS).

The protein resides in the cell membrane. The enzyme catalyses phosphate(out) + ATP + H2O = ADP + 2 phosphate(in) + H(+). Functionally, part of the ABC transporter complex PstSACB involved in phosphate import. Responsible for energy coupling to the transport system. The protein is Phosphate import ATP-binding protein PstB of Halalkalibacterium halodurans (strain ATCC BAA-125 / DSM 18197 / FERM 7344 / JCM 9153 / C-125) (Bacillus halodurans).